A 95-amino-acid chain; its full sequence is Large ribosomal subunit protein uL23cz/uL23cy (95 aa).

Belongs to the universal ribosomal protein uL23 family. In terms of assembly, part of the 50S ribosomal subunit.

The protein localises to the plastid. Its subcellular location is the chloroplast. In terms of biological role, binds to 23S rRNA. The protein is Large ribosomal subunit protein uL23cz/uL23cy (rpl23-A) of Amborella trichopoda.